We begin with the raw amino-acid sequence, 510 residues long: Probable mannosyl-oligosaccharide alpha-1,2-mannosidase 1B (510 aa).

The first 21 residues, 1–21 (MHFSSLSLPLTALSLVTPSLA), serve as a signal peptide directing secretion. N-linked (GlcNAc...) asparagine glycans are attached at residues Asn35, Asn95, Asn182, and Asn249. Cys332 and Cys361 are disulfide-bonded. Asn366 is a glycosylation site (N-linked (GlcNAc...) asparagine). Catalysis depends on Glu375, which acts as the Proton donor. Thr501 is a binding site for Ca(2+).

Belongs to the glycosyl hydrolase 47 family. In terms of assembly, monomer. Ca(2+) serves as cofactor. The cofactor is Mg(2+).

The protein localises to the cytoplasmic vesicle lumen. It carries out the reaction N(4)-(alpha-D-Man-(1-&gt;2)-alpha-D-Man-(1-&gt;2)-alpha-D-Man-(1-&gt;3)-[alpha-D-Man-(1-&gt;2)-alpha-D-Man-(1-&gt;3)-[alpha-D-Man-(1-&gt;2)-alpha-D-Man-(1-&gt;6)]-alpha-D-Man-(1-&gt;6)]-beta-D-Man-(1-&gt;4)-beta-D-GlcNAc-(1-&gt;4)-beta-D-GlcNAc)-L-asparaginyl-[protein] (N-glucan mannose isomer 9A1,2,3B1,2,3) + 4 H2O = N(4)-(alpha-D-Man-(1-&gt;3)-[alpha-D-Man-(1-&gt;3)-[alpha-D-Man-(1-&gt;6)]-alpha-D-Man-(1-&gt;6)]-beta-D-Man-(1-&gt;4)-beta-D-GlcNAc-(1-&gt;4)-beta-D-GlcNAc)-L-asparaginyl-[protein] (N-glucan mannose isomer 5A1,2) + 4 beta-D-mannose. The enzyme catalyses N(4)-(alpha-D-Man-(1-&gt;2)-alpha-D-Man-(1-&gt;2)-alpha-D-Man-(1-&gt;3)-[alpha-D-Man-(1-&gt;3)-[alpha-D-Man-(1-&gt;2)-alpha-D-Man-(1-&gt;6)]-alpha-D-Man-(1-&gt;6)]-beta-D-Man-(1-&gt;4)-beta-D-GlcNAc-(1-&gt;4)-beta-D-GlcNAc)-L-asparaginyl-[protein] (N-glucan mannose isomer 8A1,2,3B1,3) + 3 H2O = N(4)-(alpha-D-Man-(1-&gt;3)-[alpha-D-Man-(1-&gt;3)-[alpha-D-Man-(1-&gt;6)]-alpha-D-Man-(1-&gt;6)]-beta-D-Man-(1-&gt;4)-beta-D-GlcNAc-(1-&gt;4)-beta-D-GlcNAc)-L-asparaginyl-[protein] (N-glucan mannose isomer 5A1,2) + 3 beta-D-mannose. It functions in the pathway protein modification; protein glycosylation. Involved in the maturation of Asn-linked oligosaccharides. Progressively trims alpha-1,2-linked mannose residues from Man(9)GlcNAc(2) to produce Man(5)GlcNAc(2). This Aspergillus flavus (strain ATCC 200026 / FGSC A1120 / IAM 13836 / NRRL 3357 / JCM 12722 / SRRC 167) protein is Probable mannosyl-oligosaccharide alpha-1,2-mannosidase 1B (mns1B).